Here is an 864-residue protein sequence, read N- to C-terminus: Mitochondrial 15S rRNA processing factor CCM1 (864 aa).

The N-terminal 76 residues, 1 to 76 (MYMARCGPKN…REFSNTLKER (76 aa)), are a transit peptide targeting the mitochondrion. PPR repeat units lie at residues 319–353 (NKQN…STKH) and 356–390 (DICT…NIKP).

Belongs to the CCM1 family. Binds to mitochondrial small subunit 15S rRNA.

The protein resides in the mitochondrion. Regulates mitochondrial small subunit maturation by controlling 15S rRNA 5'-end processing. Localizes to the 5' precursor of the 15S rRNA in a position that is subsequently occupied by mS47 in the mature yeast mtSSU. Uses structure and sequence-specific RNA recognition, binding to a single-stranded region of the precursor and specifically recognizing bases -6 to -1. The exchange of Ccm1 for mS47 is coupled to the irreversible removal of precursor rRNA that is accompanied by conformational changes of the mitoribosomal proteins uS5m and mS26. These conformational changes signal completion of 5'-end rRNA processing through protection of the mature 5'-end of the 15S rRNA and stabilization of mS47. The removal of the 5' precursor together with the dissociation of Ccm1 may be catalyzed by the 5'-3' exoribonuclease Pet127. Involved in the specific removal of group I introns in mitochondrial encoded transcripts. The chain is Mitochondrial 15S rRNA processing factor CCM1 (CCM1) from Saccharomyces cerevisiae (strain JAY291) (Baker's yeast).